A 108-amino-acid polypeptide reads, in one-letter code: Insulin (108 aa).

The first 24 residues, 1–24, serve as a signal peptide directing secretion; sequence MALWMHLLPLLALLALWGPEPAPA. 3 disulfides stabilise this stretch: Cys31-Cys94, Cys43-Cys107, and Cys93-Cys98. Positions 57–85 are cleaved as a propeptide — c peptide; that stretch reads EAEDLQVGQVELGGGSITGSLPPLEGPMQ.

Belongs to the insulin family. In terms of assembly, heterodimer of a B chain and an A chain linked by two disulfide bonds.

The protein localises to the secreted. Functionally, insulin decreases blood glucose concentration. It increases cell permeability to monosaccharides, amino acids and fatty acids. It accelerates glycolysis, the pentose phosphate cycle, and glycogen synthesis in liver. This is Insulin (INS) from Aotus trivirgatus (Three-striped night monkey).